Here is an 816-residue protein sequence, read N- to C-terminus: Endo-acting ulvan lyase (816 aa).

The signal sequence occupies residues 1-23; that stretch reads MGTSVRRISVVLMMLFGTNFCWS.

The protein belongs to the polysaccharide lyase family.

It localises to the cell surface. The protein localises to the periplasm. Its function is as follows. Ulvan lyase involved in ulvan degradation. Ulvan is the main polysaccharide component of the Ulvales (green seaweed) cell wall. It is composed of disaccharide building blocks comprising 3-sulfated rhamnose (Rha3S) linked to D-glucuronic acid (GlcA), L-iduronic acid (IduA), or D-xylose (Xyl). Ulvan lyase catalyzes the endolytic cleavage of the glycosidic bond between Rha3S and the uronic acids GlcA or IduA, producing oligosaccharides that have unsaturated 4-deoxy-L-threo-hex-4-enopyranosiduronic acid (deltaUA) at the non-reducing end. This results eventually in the degradation of the ulvan polysaccharide into deltaUA-Rha3S disaccharides and deltaUA-Rha3S-Xyl-Rha3S tetrasaccharides. This Formosa agariphila (strain DSM 15362 / KCTC 12365 / LMG 23005 / KMM 3901 / M-2Alg 35-1) protein is Endo-acting ulvan lyase.